The primary structure comprises 395 residues: Elongation factor Tu (395 aa).

Residues 10–204 (KTHANIGTIG…AVDEYIPTPE (195 aa)) enclose the tr-type G domain. Residues 19-26 (GHVDHGKT) form a G1 region. 19–26 (GHVDHGKT) contacts GTP. A Mg(2+)-binding site is contributed by Thr26. The tract at residues 60-64 (GITIN) is G2. A G3 region spans residues 81-84 (DCPG). GTP is bound by residues 81-85 (DCPGH) and 136-139 (NKVD). Positions 136 to 139 (NKVD) are G4. The G5 stretch occupies residues 174-176 (SAL).

It belongs to the TRAFAC class translation factor GTPase superfamily. Classic translation factor GTPase family. EF-Tu/EF-1A subfamily. Monomer.

The protein localises to the cytoplasm. The catalysed reaction is GTP + H2O = GDP + phosphate + H(+). GTP hydrolase that promotes the GTP-dependent binding of aminoacyl-tRNA to the A-site of ribosomes during protein biosynthesis. The polypeptide is Elongation factor Tu (Macrococcus caseolyticus (strain JCSC5402) (Macrococcoides caseolyticum)).